A 604-amino-acid chain; its full sequence is UvrABC system protein C (604 aa).

In terms of domain architecture, GIY-YIG spans 14–91 (ESPGVYRMLD…IKEQRPPYNI (78 aa)). The region spanning 202-237 (EQVTAQLTRDMETASQALDFEEAARLRDQIQQLRRL) is the UVR domain. The tract at residues 538–557 (GHRQQRDKQRRTSTLQDIPG) is disordered.

This sequence belongs to the UvrC family. Interacts with UvrB in an incision complex.

It localises to the cytoplasm. In terms of biological role, the UvrABC repair system catalyzes the recognition and processing of DNA lesions. UvrC both incises the 5' and 3' sides of the lesion. The N-terminal half is responsible for the 3' incision and the C-terminal half is responsible for the 5' incision. This Chromohalobacter salexigens (strain ATCC BAA-138 / DSM 3043 / CIP 106854 / NCIMB 13768 / 1H11) protein is UvrABC system protein C.